Consider the following 1168-residue polypeptide: Carbamoyl phosphate synthase arginine-specific large chain, mitochondrial (1168 aa).

Residues Met1–Leu51 constitute a mitochondrion transit peptide. A carboxyphosphate synthetic domain region spans residues Arg86–Asp483. ATP contacts are provided by residues Arg213, Ala243–Val298, Arg253, Gly259, Gly260, Lys290, Leu292, Glu297, Gly323, Ile324, His325, Gln366, and Glu380. The ATP-grasp 1 domain occupies Ala217–Leu409. Residues Gln366, Glu380, and Asn382 each contribute to the Mg(2+) site. Gln366, Glu380, and Asn382 together coordinate Mn(2+). The interval Pro484–Asp628 is oligomerization domain. Residues Val629–Met1017 are carbamoyl phosphate synthetic domain. The region spanning Ser754–Val951 is the ATP-grasp 2 domain. Residues Ala780–Ile837, Arg790, Lys829, Ile831, Glu836, Gly861, Val862, His863, Ser864, Gln904, and Glu922 each bind ATP. Mg(2+)-binding residues include Gln904, Glu922, and Asn924. Residues Gln904, Glu922, and Asn924 each contribute to the Mn(2+) site. The segment at Asn1018 to Ile1152 is allosteric domain. The 150-residue stretch at Phe1019–Leu1168 folds into the MGS-like domain.

The protein belongs to the CarB family. Heterodimer composed of 2 chains; the small (or glutamine) chain promotes the hydrolysis of glutamine to ammonia, which is used by the large (or ammonia) chain to synthesize carbamoyl phosphate. Mg(2+) serves as cofactor. It depends on Mn(2+) as a cofactor.

It is found in the mitochondrion matrix. It carries out the reaction hydrogencarbonate + L-glutamine + 2 ATP + H2O = carbamoyl phosphate + L-glutamate + 2 ADP + phosphate + 2 H(+). The enzyme catalyses hydrogencarbonate + NH4(+) + 2 ATP = carbamoyl phosphate + 2 ADP + phosphate + 2 H(+). The protein operates within amino-acid biosynthesis; L-arginine biosynthesis; carbamoyl phosphate from bicarbonate: step 1/1. Functionally, large subunit of the arginine-specific carbamoyl phosphate synthase (CPSase). CPSase catalyzes the formation of carbamoyl phosphate from the ammonia moiety of glutamine, hydrogencarbonate, and phosphate donated by ATP, the first step of the arginine biosynthetic pathway. The large subunit (synthetase) binds the substrates ammonia (free or transferred from glutamine from the small subunit), hydrogencarbonate and ATP and carries out an ATP-coupled ligase reaction, activating hydrogencarbonate by forming carboxy phosphate which reacts with ammonia to form carbamoyl phosphate. This chain is Carbamoyl phosphate synthase arginine-specific large chain, mitochondrial (arg-3), found in Neurospora crassa (strain ATCC 24698 / 74-OR23-1A / CBS 708.71 / DSM 1257 / FGSC 987).